We begin with the raw amino-acid sequence, 145 residues long: Protein SprT-like (145 aa).

In terms of domain architecture, SprT-like spans 4–141 (TDYVKEVSRQ…CGNCHGKLRH (138 aa)). His64 contacts Zn(2+). Residue Glu65 is part of the active site. His68 is a Zn(2+) binding site.

The protein belongs to the SprT family. The cofactor is Zn(2+).

Its subcellular location is the cytoplasm. The protein is Protein SprT-like of Streptococcus mutans serotype c (strain ATCC 700610 / UA159).